The chain runs to 239 residues: Orotidine 5'-phosphate decarboxylase (239 aa).

Substrate contacts are provided by residues Asp-11, Lys-33, 60-69 (DLKLHDIPTT), Thr-123, Arg-185, Gln-194, Gly-214, and Arg-215. Residue Lys-62 is the Proton donor of the active site.

It belongs to the OMP decarboxylase family. Type 1 subfamily. In terms of assembly, homodimer.

The enzyme catalyses orotidine 5'-phosphate + H(+) = UMP + CO2. It participates in pyrimidine metabolism; UMP biosynthesis via de novo pathway; UMP from orotate: step 2/2. Catalyzes the decarboxylation of orotidine 5'-monophosphate (OMP) to uridine 5'-monophosphate (UMP). In Bacillus subtilis (strain 168), this protein is Orotidine 5'-phosphate decarboxylase (pyrF).